The sequence spans 535 residues: Bifunctional purine biosynthesis protein PurH (535 aa).

One can recognise an MGS-like domain in the interval 1 to 145; the sequence is MAQTALISVS…KNWKDVGVLT (145 aa).

This sequence belongs to the PurH family.

It catalyses the reaction (6R)-10-formyltetrahydrofolate + 5-amino-1-(5-phospho-beta-D-ribosyl)imidazole-4-carboxamide = 5-formamido-1-(5-phospho-D-ribosyl)imidazole-4-carboxamide + (6S)-5,6,7,8-tetrahydrofolate. It carries out the reaction IMP + H2O = 5-formamido-1-(5-phospho-D-ribosyl)imidazole-4-carboxamide. The protein operates within purine metabolism; IMP biosynthesis via de novo pathway; 5-formamido-1-(5-phospho-D-ribosyl)imidazole-4-carboxamide from 5-amino-1-(5-phospho-D-ribosyl)imidazole-4-carboxamide (10-formyl THF route): step 1/1. It participates in purine metabolism; IMP biosynthesis via de novo pathway; IMP from 5-formamido-1-(5-phospho-D-ribosyl)imidazole-4-carboxamide: step 1/1. The chain is Bifunctional purine biosynthesis protein PurH from Variovorax paradoxus (strain S110).